The primary structure comprises 532 residues: Eukaryotic translation initiation factor 3 subunit D (532 aa).

The disordered stretch occupies residues 108-161 (ATVLKTRGGAPRGGSFAGRGGSQRGGRFQNQPGRGPVGGQRGPNPRFGKSKFGW). Over residues 117–131 (APRGGSFAGRGGSQR) the composition is skewed to gly residues. Positions 132 to 141 (GGRFQNQPGR) are enriched in low complexity. The RNA gate stretch occupies residues 296–310 (PLDFITVDENAADPP).

This sequence belongs to the eIF-3 subunit D family. As to quaternary structure, component of the eukaryotic translation initiation factor 3 (eIF-3) complex.

Its subcellular location is the cytoplasm. In terms of biological role, mRNA cap-binding component of the eukaryotic translation initiation factor 3 (eIF-3) complex, which is involved in protein synthesis of a specialized repertoire of mRNAs and, together with other initiation factors, stimulates binding of mRNA and methionyl-tRNAi to the 40S ribosome. The eIF-3 complex specifically targets and initiates translation of a subset of mRNAs involved in cell proliferation. In the eIF-3 complex, eif3d specifically recognizes and binds the 7-methylguanosine cap of a subset of mRNAs. This is Eukaryotic translation initiation factor 3 subunit D from Yarrowia lipolytica (strain CLIB 122 / E 150) (Yeast).